Here is a 228-residue protein sequence, read N- to C-terminus: CD302 antigen (228 aa).

Residues 1–20 form the signal peptide; that stretch reads MPHAALSSLVLLSLATAIVA. Residues 21–165 lie on the Extracellular side of the membrane; it reads DCPSSTWVQF…YDKKYLSDNH (145 aa). A C-type lectin domain is found at 30-149; sequence FQGSCYAFLQ…CEISSVEGTL (120 aa). The N-linked (GlcNAc...) asparagine glycan is linked to Asn-107. A disulfide bridge links Cys-125 with Cys-140. A helical membrane pass occupies residues 166–186; it reads ILISTLVIASTVTLAVLGAII. Residues 187–228 are Cytoplasmic-facing; that stretch reads WFLYRRNARSGFTSFSPAPLSPYSDGCALVVAEEDEYAVQLD.

Its subcellular location is the membrane. It localises to the cell projection. It is found in the filopodium. The protein resides in the cytoplasm. The protein localises to the cell cortex. Its subcellular location is the microvillus. Functionally, potential multifunctional C-type lectin receptor that may play roles in endocytosis and phagocytosis as well as in cell adhesion and migration. This chain is CD302 antigen (Cd302), found in Mus musculus (Mouse).